The primary structure comprises 37 residues: Omega-sparatoxin-Hv1a (37 aa).

Cystine bridges form between Cys-4/Cys-18, Cys-11/Cys-23, and Cys-17/Cys-33.

As to expression, expressed by the venom gland.

It is found in the secreted. Blocks calcium channels (Cav). This chain is Omega-sparatoxin-Hv1a, found in Heteropoda venatoria (Brown huntsman spider).